We begin with the raw amino-acid sequence, 439 residues long: Serine hydroxymethyltransferase (439 aa).

(6S)-5,6,7,8-tetrahydrofolate-binding positions include leucine 119 and 123–125 (GHL). Lysine 228 is modified (N6-(pyridoxal phosphate)lysine). 370–372 (SPF) is a binding site for (6S)-5,6,7,8-tetrahydrofolate.

It belongs to the SHMT family. Homodimer. It depends on pyridoxal 5'-phosphate as a cofactor.

It is found in the cytoplasm. The catalysed reaction is (6R)-5,10-methylene-5,6,7,8-tetrahydrofolate + glycine + H2O = (6S)-5,6,7,8-tetrahydrofolate + L-serine. Its pathway is one-carbon metabolism; tetrahydrofolate interconversion. It functions in the pathway amino-acid biosynthesis; glycine biosynthesis; glycine from L-serine: step 1/1. In terms of biological role, catalyzes the reversible interconversion of serine and glycine with tetrahydrofolate (THF) serving as the one-carbon carrier. This reaction serves as the major source of one-carbon groups required for the biosynthesis of purines, thymidylate, methionine, and other important biomolecules. Also exhibits THF-independent aldolase activity toward beta-hydroxyamino acids, producing glycine and aldehydes, via a retro-aldol mechanism. The polypeptide is Serine hydroxymethyltransferase (Chlorobium phaeobacteroides (strain BS1)).